A 201-amino-acid chain; its full sequence is Cytochrome c oxidase assembly protein CtaG (201 aa).

Residues M1–R12 lie on the Cytoplasmic side of the membrane. Residues R13–A35 traverse the membrane as a helical; Signal-anchor for type II membrane protein segment. Residues S36–G201 lie on the Periplasmic side of the membrane.

It belongs to the COX11/CtaG family.

Its subcellular location is the cell inner membrane. Its function is as follows. Exerts its effect at some terminal stage of cytochrome c oxidase synthesis, probably by being involved in the insertion of the copper B into subunit I. This Brucella suis biovar 1 (strain 1330) protein is Cytochrome c oxidase assembly protein CtaG.